Here is a 668-residue protein sequence, read N- to C-terminus: MTVTYSSKVANATFFGFHRLLLKWRGSIYKLLYREFIVFAVLYTAISLVYRLLLTGVQKRYFEKLSIYCDRYAEQIPVTFVLGFYVTLVVNRWWNQFVNLPWPDRLMFLISSSVHGSDEHGRLLRRTLMRYVNLTSLLIFRSVSTAVYKRFPTMDHVVEAGFMTTDERKLFNHLKSPHLKYWVPFIWFGNLATKARNEGRIRDSVDLQSLMTEMNRYRSWCSLLFGYDWVGIPLVYTQVVTLAVYTFFFACLIGRQFLDPTKGYAGHDLDLYIPIFTLLQFFFYAGWLKVAEQLINPFGEDDDDFETNWCIDRNLQVSLLAVDEMHMSLPKMKKDIYWDDSAARPPYTLAAADYCIPSFLGSTVQMGLSGSDFPDEEWLWDYEKHGHRHSMIRRVKRFLSAHEHPSSPRRRSYRRQTSDSSMFLPRDDLSPARDLLDVPSRNPPRASPTWKKSCFPEGSPTLHFSMGELSTIRETSQTSTLQSLTPQSSVRTSPIKMPLVPEVLITAAEAPVPTSGGYHHDSATSILSSEFTGVQPSKTEQQQGPMGSILSPSEKETPPGGPSPQTVSASAEENIFNCEEDPGDTFLKRWSLPGFLGSSHTSLGNLSPDPMSSQPALLIDTETSSEISGINIVAGSRVSSDMLYLMENLDTKETDIIELNKETEESPK.

Residues 1–31 (MTVTYSSKVANATFFGFHRLLLKWRGSIYKL) are Cytoplasmic-facing. Ca(2+) is bound at residue alanine 10. The helical transmembrane segment at 32-51 (LYREFIVFAVLYTAISLVYR) threads the bilayer. The Extracellular portion of the chain corresponds to 52 to 60 (LLLTGVQKR). A helical membrane pass occupies residues 61–82 (YFEKLSIYCDRYAEQIPVTFVL). Topologically, residues 83–237 (GFYVTLVVNR…DWVGIPLVYT (155 aa)) are cytoplasmic. The chain crosses the membrane as a helical span at residues 238–255 (QVVTLAVYTFFFACLIGR). Topologically, residues 256-274 (QFLDPTKGYAGHDLDLYIP) are extracellular. A helical membrane pass occupies residues 275 to 288 (IFTLLQFFFYAGWL). The Cytoplasmic portion of the chain corresponds to 289–668 (KVAEQLINPF…LNKETEESPK (380 aa)). Positions 293, 296, 301, and 304 each coordinate Ca(2+). Disordered stretches follow at residues 400-454 (SAHE…KKSC), 473-493 (RETS…VRTS), and 532-570 (TGVQ…VSAS). Over residues 425–436 (PRDDLSPARDLL) the composition is skewed to basic and acidic residues. The segment covering 475–489 (TSQTSTLQSLTPQSS) has biased composition (low complexity). Positions 532-545 (TGVQPSKTEQQQGP) are enriched in polar residues.

It belongs to the anion channel-forming bestrophin (TC 1.A.46) family. Calcium-sensitive chloride channel subfamily. In terms of tissue distribution, present in skeletal muscle and weakly in brain, spinal cord, bone marrow and retina.

The protein resides in the cell membrane. It carries out the reaction chloride(in) = chloride(out). In terms of biological role, ligand-gated anion channel that allows the movement of chloride monoatomic anions across cell membranes when activated by calcium (Ca2+). This is Bestrophin-3 from Homo sapiens (Human).